We begin with the raw amino-acid sequence, 156 residues long: Small ribosomal subunit protein uS7 (156 aa).

The protein belongs to the universal ribosomal protein uS7 family. In terms of assembly, part of the 30S ribosomal subunit. Contacts proteins S9 and S11.

One of the primary rRNA binding proteins, it binds directly to 16S rRNA where it nucleates assembly of the head domain of the 30S subunit. Is located at the subunit interface close to the decoding center, probably blocks exit of the E-site tRNA. The protein is Small ribosomal subunit protein uS7 of Azoarcus sp. (strain BH72).